Consider the following 617-residue polypeptide: Pyrophosphate--fructose 6-phosphate 1-phosphotransferase subunit alpha 2 (617 aa).

Belongs to the phosphofructokinase type A (PFKA) family. PPi-dependent PFK group II subfamily. Clade 'Long' sub-subfamily. Tetramer of two alpha (regulatory) and two beta (catalytic) chains. Expressed in roots and specific parts such as the trichomes of leaves, cotyledon veins, as well as in stamen and gynoecium of flowers.

It is found in the cytoplasm. Its pathway is carbohydrate degradation; glycolysis; D-glyceraldehyde 3-phosphate and glycerone phosphate from D-glucose: step 3/4. Its activity is regulated as follows. Allosterically activated by fructose 2,6-bisphosphate. Its function is as follows. Regulatory subunit of pyrophosphate--fructose 6-phosphate 1-phosphotransferase. The chain is Pyrophosphate--fructose 6-phosphate 1-phosphotransferase subunit alpha 2 from Arabidopsis thaliana (Mouse-ear cress).